The primary structure comprises 163 residues: Cuticle protein 38 (163 aa).

Repeat copies occupy residues 7–10, 13–16, 20–23, 26–29, 56–59, 62–65, 68–71, 75–78, 81–84, 93–96, 123–126, 135–138, 141–144, and 156–159.

Its function is as follows. Component of the cuticle of migratory locust which contains more than 100 different structural proteins. The protein is Cuticle protein 38 of Locusta migratoria (Migratory locust).